Here is a 632-residue protein sequence, read N- to C-terminus: Phosphomethylpyrimidine synthase (632 aa).

Positions 1 to 13 are enriched in polar residues; that stretch reads MNIRSNPDTTLPA. Residues 1–26 are disordered; sequence MNIRSNPDTTLPAVTTGPLPSSRKIF. Substrate is bound by residues Asn-221, Met-250, Tyr-279, His-315, 335–337, 376–379, and Glu-415; these read SRG and DGLR. Residue His-419 participates in Zn(2+) binding. Tyr-442 lines the substrate pocket. Residue His-483 coordinates Zn(2+). [4Fe-4S] cluster is bound by residues Cys-563, Cys-566, and Cys-571.

Belongs to the ThiC family. As to quaternary structure, homodimer. [4Fe-4S] cluster serves as cofactor.

It catalyses the reaction 5-amino-1-(5-phospho-beta-D-ribosyl)imidazole + S-adenosyl-L-methionine = 4-amino-2-methyl-5-(phosphooxymethyl)pyrimidine + CO + 5'-deoxyadenosine + formate + L-methionine + 3 H(+). It participates in cofactor biosynthesis; thiamine diphosphate biosynthesis. Functionally, catalyzes the synthesis of the hydroxymethylpyrimidine phosphate (HMP-P) moiety of thiamine from aminoimidazole ribotide (AIR) in a radical S-adenosyl-L-methionine (SAM)-dependent reaction. In Afipia carboxidovorans (strain ATCC 49405 / DSM 1227 / KCTC 32145 / OM5) (Oligotropha carboxidovorans), this protein is Phosphomethylpyrimidine synthase.